Here is a 308-residue protein sequence, read N- to C-terminus: Ycf92-like protein (308 aa).

5 helical membrane-spanning segments follow: residues 41 to 61 (FANN…TLIA), 75 to 95 (LLTL…GLGV), 153 to 173 (ISTI…TTAP), 192 to 212 (IPVT…PLVL), and 288 to 308 (WLAI…GNQI).

This sequence belongs to the ycf92 family.

It localises to the membrane. The chain is Ycf92-like protein from Nostoc sp. (strain PCC 7120 / SAG 25.82 / UTEX 2576).